The chain runs to 166 residues: Phosphopantetheine adenylyltransferase (166 aa).

Residue Ser9 coordinates substrate. ATP-binding positions include 9 to 10 and His17; that span reads SF. The substrate site is built by Lys41, Leu74, and Lys88. Residues 89 to 91, Glu99, and 123 to 129 each bind ATP; these read GLR and YIHLSST.

This sequence belongs to the bacterial CoaD family. Homohexamer. It depends on Mg(2+) as a cofactor.

Its subcellular location is the cytoplasm. The catalysed reaction is (R)-4'-phosphopantetheine + ATP + H(+) = 3'-dephospho-CoA + diphosphate. The protein operates within cofactor biosynthesis; coenzyme A biosynthesis; CoA from (R)-pantothenate: step 4/5. Reversibly transfers an adenylyl group from ATP to 4'-phosphopantetheine, yielding dephospho-CoA (dPCoA) and pyrophosphate. The protein is Phosphopantetheine adenylyltransferase of Pseudarthrobacter chlorophenolicus (strain ATCC 700700 / DSM 12829 / CIP 107037 / JCM 12360 / KCTC 9906 / NCIMB 13794 / A6) (Arthrobacter chlorophenolicus).